We begin with the raw amino-acid sequence, 413 residues long: Porin PorA (413 aa).

The signal sequence occupies residues 1-22; that stretch reads MKKVVSSLLIILGAAMLIFAIA. The interval 265 to 288 is disordered; it reads TKSAADSKDDKKKDGDKKDEKSPE.

It belongs to the PorA family.

Its subcellular location is the secreted. It is found in the cell wall. Its function is as follows. Forms water-filled channels that favor the permeation of cations. This Corynebacterium resistens (strain DSM 45100 / JCM 12819 / GTC 2026 / SICGH 158) protein is Porin PorA.